A 191-amino-acid polypeptide reads, in one-letter code: Elongation factor P-like protein (191 aa).

This sequence belongs to the elongation factor P family.

In Photobacterium profundum (strain SS9), this protein is Elongation factor P-like protein.